A 184-amino-acid chain; its full sequence is Large ribosomal subunit protein uL5 (184 aa).

This sequence belongs to the universal ribosomal protein uL5 family. Part of the 50S ribosomal subunit; part of the 5S rRNA/L5/L18/L25 subcomplex. Contacts the 5S rRNA and the P site tRNA. Forms a bridge to the 30S subunit in the 70S ribosome.

This is one of the proteins that bind and probably mediate the attachment of the 5S RNA into the large ribosomal subunit, where it forms part of the central protuberance. In the 70S ribosome it contacts protein S13 of the 30S subunit (bridge B1b), connecting the 2 subunits; this bridge is implicated in subunit movement. Contacts the P site tRNA; the 5S rRNA and some of its associated proteins might help stabilize positioning of ribosome-bound tRNAs. The protein is Large ribosomal subunit protein uL5 of Thermotoga sp. (strain RQ2).